The following is a 594-amino-acid chain: MHEHLKEKLAILPDQPGCYLMKDKQGTVIYVGKAKVLKNRVRSYFTGSHDGKTLRLVGEIVDFEYIVTSSNLEALILELNLIKKYDPKYNIQLKDDKTYPFIKITAEKQPRLLITRNVKKDKGKYFGPYPNAQSAHETKKLLDRMYPLRKCSNMPDKVCLYYHMGQCLAPCVKEVTDEQNKEIVDEIIKFLNGGHKEIRSELETKMYEASEKLEFERAKELRDQIAHIDAIMEKQKMIMSDLVDRDVFGYAVDKGWMCVQVFFVRKGKLIERDVSMFPIYDEPEEGFLTFIGQFYENSSHFKPKEIVVPGSIDSELVERFLEVEATQPKRGKKKDLVELANKNAKIALEEKFHLIERDEERTVKAIDNLGKQLGIETPYRIEAFDNSNIQGTNPVSAMIAFIDGKPAKKEYRKYKIKTVQGPDDYESMREVVRRRYTRALKENLPLPDLIIIDGGKGHLAATSDVLENELGLYIPMAGLVKDDKHKTSHLIIGDPPEPVMLERNSQEFYLLQRIQDEVHRFAITFHRQLHGKSVIQSALDDIPGIGDKRKKVLLKHFGSLKKMKEASIAEFVEAGMPKNVAEMIYTYLTDKKTL.

The region spanning 14-91 (DQPGCYLMKD…IKKYDPKYNI (78 aa)) is the GIY-YIG domain. Residues 196 to 231 (KEIRSELETKMYEASEKLEFERAKELRDQIAHIDAI) enclose the UVR domain.

The protein belongs to the UvrC family. As to quaternary structure, interacts with UvrB in an incision complex.

It localises to the cytoplasm. The UvrABC repair system catalyzes the recognition and processing of DNA lesions. UvrC both incises the 5' and 3' sides of the lesion. The N-terminal half is responsible for the 3' incision and the C-terminal half is responsible for the 5' incision. This chain is UvrABC system protein C, found in Bacillus mycoides (strain KBAB4) (Bacillus weihenstephanensis).